The sequence spans 353 residues: Immune-associated nucleotide-binding protein 8 (353 aa).

Residues 1–10 (MANDQKNSES) show a composition bias toward polar residues. Positions 1–43 (MANDQKNSESFPAKEDHKKDDAAAPAEVDHKDEFSASQPHPVE) are disordered. Over residues 12-34 (PAKEDHKKDDAAAPAEVDHKDEF) the composition is skewed to basic and acidic residues. An AIG1-type G domain is found at 40 to 248 (HPVENIVLVG…YTDEMYHMIK (209 aa)). A G1 region spans residues 49-56 (GRTGNGKS). Residues 49-57 (GRTGNGKSA) and S70 each bind GTP. Residues 76–80 (GVTME) are G2. A G3 region spans residues 98–101 (DTPG). Positions 168 to 171 (TGGD) are G4. Residues 207–209 (DNK) form a G5 region. N208 serves as a coordination point for GTP. Residues 244–291 (YHMIKEENERHKKEQEELESKGHSEEQLAALMKELQIMNERNLKAMAE) are a coiled coil.

The protein belongs to the TRAFAC class TrmE-Era-EngA-EngB-Septin-like GTPase superfamily. AIG1/Toc34/Toc159-like paraseptin GTPase family. IAN subfamily. As to expression, mainly expressed in leaves.

This Arabidopsis thaliana (Mouse-ear cress) protein is Immune-associated nucleotide-binding protein 8.